The following is a 256-amino-acid chain: L-erythrulose-1-phosphate isomerase (256 aa).

His96 serves as the catalytic Electrophile. Catalysis depends on Glu169, which acts as the Proton acceptor. The substrate site is built by Gly175 and Ser212.

Belongs to the triosephosphate isomerase family. In terms of assembly, homodimer.

The protein resides in the cytoplasm. The enzyme catalyses L-erythrulose 1-phosphate = D-erythrulose 4-phosphate. It functions in the pathway carbohydrate metabolism; erythritol degradation. Catalyzes the isomerization of D-erythrulose-4P to L-erythrulose-1P. Involved in the degradation pathway of erythritol, that allows B.abortus to grow on this compound as the sole carbon source. This is L-erythrulose-1-phosphate isomerase from Brucella abortus (strain 2308).